We begin with the raw amino-acid sequence, 126 residues long: Small ribosomal subunit protein uS12 (126 aa).

Residues 1-26 (MPTINQLVRKGRASETTKSKSPALQD) are disordered. Asp89 is modified (3-methylthioaspartic acid). Positions 103–126 (DTQGVKDRKQARSKYGAKRAKAGK) are disordered. Over residues 113–126 (ARSKYGAKRAKAGK) the composition is skewed to basic residues.

Belongs to the universal ribosomal protein uS12 family. In terms of assembly, part of the 30S ribosomal subunit. Contacts proteins S8 and S17. May interact with IF1 in the 30S initiation complex.

In terms of biological role, with S4 and S5 plays an important role in translational accuracy. Interacts with and stabilizes bases of the 16S rRNA that are involved in tRNA selection in the A site and with the mRNA backbone. Located at the interface of the 30S and 50S subunits, it traverses the body of the 30S subunit contacting proteins on the other side and probably holding the rRNA structure together. The combined cluster of proteins S8, S12 and S17 appears to hold together the shoulder and platform of the 30S subunit. This Paraburkholderia xenovorans (strain LB400) protein is Small ribosomal subunit protein uS12.